Consider the following 445-residue polypeptide: Tubulin beta chain (445 aa).

Glutamine 11, glutamate 69, serine 138, glycine 142, threonine 143, glycine 144, asparagine 205, and asparagine 227 together coordinate GTP. Glutamate 69 contacts Mg(2+).

The protein belongs to the tubulin family. In terms of assembly, dimer of alpha and beta chains. A typical microtubule is a hollow water-filled tube with an outer diameter of 25 nm and an inner diameter of 15 nM. Alpha-beta heterodimers associate head-to-tail to form protofilaments running lengthwise along the microtubule wall with the beta-tubulin subunit facing the microtubule plus end conferring a structural polarity. Microtubules usually have 13 protofilaments but different protofilament numbers can be found in some organisms and specialized cells. Mg(2+) is required as a cofactor.

The protein localises to the cytoplasm. Its subcellular location is the cytoskeleton. Its function is as follows. Tubulin is the major constituent of microtubules, a cylinder consisting of laterally associated linear protofilaments composed of alpha- and beta-tubulin heterodimers. Microtubules grow by the addition of GTP-tubulin dimers to the microtubule end, where a stabilizing cap forms. Below the cap, tubulin dimers are in GDP-bound state, owing to GTPase activity of alpha-tubulin. This is Tubulin beta chain (TUB2) from Ajellomyces capsulatus (Darling's disease fungus).